Consider the following 236-residue polypeptide: Small ribosomal subunit protein eS6 (236 aa).

Belongs to the eukaryotic ribosomal protein eS6 family. In terms of assembly, component of the small ribosomal subunit. Part of the small subunit (SSU) processome, composed of more than 70 proteins and the RNA chaperone small nucleolar RNA (snoRNA) U3. Post-translationally, ribosomal protein S6 is the major substrate of protein kinases in eukaryote ribosomes.

Its subcellular location is the cytoplasm. It localises to the nucleus. It is found in the nucleolus. Component of the 40S small ribosomal subunit. Plays an important role in controlling cell growth and proliferation through the selective translation of particular classes of mRNA. Part of the small subunit (SSU) processome, first precursor of the small eukaryotic ribosomal subunit. During the assembly of the SSU processome in the nucleolus, many ribosome biogenesis factors, an RNA chaperone and ribosomal proteins associate with the nascent pre-rRNA and work in concert to generate RNA folding, modifications, rearrangements and cleavage as well as targeted degradation of pre-ribosomal RNA by the RNA exosome. This Dictyostelium discoideum (Social amoeba) protein is Small ribosomal subunit protein eS6 (rps6).